The sequence spans 122 residues: Large ribosomal subunit protein uL18 (122 aa).

It belongs to the universal ribosomal protein uL18 family. Part of the 50S ribosomal subunit; part of the 5S rRNA/L5/L18/L25 subcomplex. Contacts the 5S and 23S rRNAs.

Its function is as follows. This is one of the proteins that bind and probably mediate the attachment of the 5S RNA into the large ribosomal subunit, where it forms part of the central protuberance. This chain is Large ribosomal subunit protein uL18, found in Leptospira interrogans serogroup Icterohaemorrhagiae serovar copenhageni (strain Fiocruz L1-130).